Reading from the N-terminus, the 1006-residue chain is Serine/threonine-protein phosphatase BSL3 (1006 aa).

Residues 1–67 form a disordered region; it reads MDLDSSMVPE…QQQQQPQVTA (67 aa). Composition is skewed to low complexity over residues 38 to 47 and 54 to 67; these read SESESASLTP and QQQQQQQQQPQVTA. Kelch repeat units follow at residues 138–184, 242–290, 295–345, 351–398, and 419–465; these read TSAG…VATA, YLMA…TASA, LLLL…VFVN, SGGA…DAAG, and LIFI…TPPG. Disordered stretches follow at residues 454 to 494 and 552 to 579; these read AAAA…LGSP and GEVELPDRDRGAEATPSGKPSLSLIKPD. S616 carries the post-translational modification Phosphoserine. Residues D709, H711, D743, and N775 each contribute to the Mn(2+) site. H776 acts as the Proton donor in catalysis. Mn(2+) is bound by residues H828 and H907. A Phosphoserine modification is found at S964. Positions 982-1006 are disordered; that stretch reads NVNRPPTPTRGRPQNPNDRGSLAWI.

This sequence belongs to the PPP phosphatase family. BSU subfamily. Mn(2+) serves as cofactor. As to expression, expressed throughout the plant, with a higher level in younger parts.

The protein localises to the nucleus. The catalysed reaction is O-phospho-L-seryl-[protein] + H2O = L-seryl-[protein] + phosphate. It catalyses the reaction O-phospho-L-threonyl-[protein] + H2O = L-threonyl-[protein] + phosphate. Phosphatase involved in elongation process, probably by acting as a regulator of brassinolide signaling. The sequence is that of Serine/threonine-protein phosphatase BSL3 (BSL3) from Arabidopsis thaliana (Mouse-ear cress).